The sequence spans 926 residues: LPS-assembly protein LptD (926 aa).

The signal sequence occupies residues 1–22 (MALKSPAFRKKFPLLVTGSLLA). The disordered stretch occupies residues 55–91 (AAAVDLPPRPVHDTTSVSSNGTVTSQGTSSGEQSAGT). The span at 68 to 91 (TTSVSSNGTVTSQGTSSGEQSAGT) shows a compositional bias: low complexity.

Belongs to the LptD family. Component of the lipopolysaccharide transport and assembly complex. Interacts with LptE and LptA.

Its subcellular location is the cell outer membrane. Together with LptE, is involved in the assembly of lipopolysaccharide (LPS) at the surface of the outer membrane. This is LPS-assembly protein LptD from Pseudomonas syringae pv. syringae (strain B728a).